Consider the following 138-residue polypeptide: L-ectoine synthase (138 aa).

This sequence belongs to the ectoine synthase family.

The enzyme catalyses (2S)-4-acetamido-2-aminobutanoate = L-ectoine + H2O. The protein operates within amine and polyamine biosynthesis; ectoine biosynthesis; L-ectoine from L-aspartate 4-semialdehyde: step 3/3. Catalyzes the circularization of gamma-N-acetyl-alpha,gamma-diaminobutyric acid (ADABA) to ectoine (1,4,5,6-tetrahydro-2-methyl-4-pyrimidine carboxylic acid), which is an excellent osmoprotectant. This is L-ectoine synthase from Vibrio cholerae serotype O1 (strain ATCC 39541 / Classical Ogawa 395 / O395).